Reading from the N-terminus, the 526-residue chain is GMP synthase [glutamine-hydrolyzing] (526 aa).

Positions 9–207 constitute a Glutamine amidotransferase type-1 domain; that stretch reads RILILNFGSQ…VLDICSCQGR (199 aa). Cys-86 functions as the Nucleophile in the catalytic mechanism. Active-site residues include His-181 and Glu-183. The GMPS ATP-PPase domain maps to 208-401; that stretch reads WTPNNIKENI…LGLPFHMLYR (194 aa). 235–241 is a binding site for ATP; sequence SGGVDST.

In terms of assembly, homodimer.

It catalyses the reaction XMP + L-glutamine + ATP + H2O = GMP + L-glutamate + AMP + diphosphate + 2 H(+). The protein operates within purine metabolism; GMP biosynthesis; GMP from XMP (L-Gln route): step 1/1. Functionally, catalyzes the synthesis of GMP from XMP. The protein is GMP synthase [glutamine-hydrolyzing] of Baumannia cicadellinicola subsp. Homalodisca coagulata.